The chain runs to 100 residues: Small ribosomal subunit protein uS14c (100 aa).

Belongs to the universal ribosomal protein uS14 family. In terms of assembly, part of the 30S ribosomal subunit.

It is found in the plastid. It localises to the chloroplast. Binds 16S rRNA, required for the assembly of 30S particles. The protein is Small ribosomal subunit protein uS14c of Mesostigma viride (Green alga).